The sequence spans 694 residues: Transcription activator of gluconeogenesis PTRG_06536 (694 aa).

The tract at residues 1-57 is disordered; sequence MTTPDAEDASPSPEYRSDQDDDMAAEQTTDRQSGDASPTQKPANGKPNAKDPLRPRR. Residues 64-92 constitute a DNA-binding region (zn(2)-C6 fungal-type); it reads CFACQRAHLTCGDERPCGRCIKRGLQDHC. Disordered stretches follow at residues 175–216, 289–369, 384–420, and 539–569; these read FSNQ…FGPL, AMAF…GDNP, AQRS…RDTK, and VNLG…SEGA. Polar residues predominate over residues 193-204; the sequence is SVQNAGAPSTMS. Over residues 205 to 214 the composition is skewed to low complexity; it reads QGQQGMQQFG. Over residues 302 to 324 the composition is skewed to polar residues; the sequence is WQETQSRQGSMHVHTPNNTSGSG. Residues 349–363 are compositionally biased toward low complexity; that stretch reads ATHSTASPASTDAST. Residues 392 to 408 are compositionally biased toward polar residues; it reads RPQQENRPPTTALQSIH. One can recognise a PAS domain in the interval 485–559; sequence LQRHLMTLQE…SDTSTQNTTP (75 aa).

Belongs to the ERT1/acuK family.

The protein resides in the nucleus. Transcription factor which regulates nonfermentable carbon utilization. Activator of gluconeogenetic genes. The sequence is that of Transcription activator of gluconeogenesis PTRG_06536 from Pyrenophora tritici-repentis (strain Pt-1C-BFP) (Wheat tan spot fungus).